We begin with the raw amino-acid sequence, 443 residues long: Endothelin receptor type B (443 aa).

A signal peptide spans 1-26; the sequence is MQPLPTLCGRVLVALILACGVAGVQG. Residues 27–102 are Extracellular-facing; it reads EERRFPPARA…RTIEIKETFK (76 aa). A compositionally biased stretch (polar residues) spans 51-62; sequence TKTSWPTGSNAS. Residues 51-89 are disordered; the sequence is TKTSWPTGSNASVPRLSAPPQMPKAGRTAGAQRRTLPPP. A glycan (N-linked (GlcNAc...) asparagine) is linked at Asn-60. A helical transmembrane segment spans residues 103-127; it reads YINTVVSCLVFVLGIIGNSTLLRII. Topologically, residues 128–138 are cytoplasmic; it reads YKNKCMRNGPN. Residues 139–164 form a helical membrane-spanning segment; sequence ILIASLALGDLLHIIIDIPINVYKLL. Residues 165–176 lie on the Extracellular side of the membrane; the sequence is AEDWPFGVEMCK. Cysteines 175 and 256 form a disulfide. Residues 177 to 198 form a helical membrane-spanning segment; it reads LVPFIQKASVGITVLSLCALSI. Topologically, residues 199-219 are cytoplasmic; that stretch reads DRYRAVASWSRIKGIGVPKWT. The chain crosses the membrane as a helical span at residues 220 to 244; that stretch reads AVEIVLIWVVSVVLAVPEAVGFDMI. At 245–272 the chain is on the extracellular side; sequence TADYKGSYLRICLLHPTQKTAFMQFYKN. Residues 273–297 traverse the membrane as a helical segment; it reads AKDWWLFSFYFCLPLAITAFFYTLE. The Cytoplasmic segment spans residues 298-325; the sequence is TCEMLRKKSGMQIALNDHLKQRREVAKT. The residue at position 306 (Ser-306) is a Phosphoserine. A helical transmembrane segment spans residues 326–351; it reads VFCLVLVFALCWLPLHLSRILKHTLY. Residues 352 to 363 lie on the Extracellular side of the membrane; it reads DQNDPHRCELLS. Residues 364–390 traverse the membrane as a helical segment; that stretch reads FLLVLEYIGINMASLNSCINPIALYLV. The Cytoplasmic portion of the chain corresponds to 391–443; that stretch reads SKRFKNCFKWCLCCWCQSFEEKQSLEDKQSCLKFKANDHGYDNFRSSNKYSSS. Residues Cys-403, Cys-404, and Cys-406 are each lipidated (S-palmitoyl cysteine). Position 420 is a phosphoserine (Ser-420). At Tyr-440 the chain carries Phosphotyrosine. Phosphoserine is present on residues Ser-441, Ser-442, and Ser-443.

It belongs to the G-protein coupled receptor 1 family. Endothelin receptor subfamily. EDNRB sub-subfamily.

It is found in the cell membrane. Non-specific receptor for endothelin 1, 2, and 3. Mediates its action by association with G proteins that activate a phosphatidylinositol-calcium second messenger system. This Equus caballus (Horse) protein is Endothelin receptor type B (EDNRB).